A 467-amino-acid chain; its full sequence is Glutamate--tRNA ligase 2 (467 aa).

A 'HIGH' region motif is present at residues 18–28 (PSPTGYLHVGG). Positions 238–242 (PLSKR) match the 'KMSKS' region motif. Residue lysine 241 coordinates ATP.

It belongs to the class-I aminoacyl-tRNA synthetase family. Glutamate--tRNA ligase type 1 subfamily. As to quaternary structure, monomer.

It is found in the cytoplasm. The enzyme catalyses tRNA(Glu) + L-glutamate + ATP = L-glutamyl-tRNA(Glu) + AMP + diphosphate. Catalyzes the attachment of glutamate to tRNA(Glu) in a two-step reaction: glutamate is first activated by ATP to form Glu-AMP and then transferred to the acceptor end of tRNA(Glu). The protein is Glutamate--tRNA ligase 2 of Fervidobacterium nodosum (strain ATCC 35602 / DSM 5306 / Rt17-B1).